Consider the following 244-residue polypeptide: Type III pantothenate kinase (244 aa).

11 to 18 (DAGNTSIK) is a binding site for ATP. Residues tyrosine 90 and 97–100 (GIDR) each bind substrate. The Proton acceptor role is filled by aspartate 99. Aspartate 119 contacts K(+). Threonine 122 contacts ATP. Threonine 175 is a binding site for substrate.

The protein belongs to the type III pantothenate kinase family. Homodimer. NH4(+) serves as cofactor. The cofactor is K(+).

The protein resides in the cytoplasm. It catalyses the reaction (R)-pantothenate + ATP = (R)-4'-phosphopantothenate + ADP + H(+). Its pathway is cofactor biosynthesis; coenzyme A biosynthesis; CoA from (R)-pantothenate: step 1/5. Functionally, catalyzes the phosphorylation of pantothenate (Pan), the first step in CoA biosynthesis. This is Type III pantothenate kinase from Marinomonas sp. (strain MWYL1).